Reading from the N-terminus, the 475-residue chain is Ammonium transporter Rh type C (475 aa).

Residues 1 to 20 lie on the Cytoplasmic side of the membrane; the sequence is MGCVQSFRNFCDRPKNTNVR. The helical transmembrane segment at 21-41 threads the bilayer; it reads ISLPAVCFVWQIAMIILFGVF. The Extracellular portion of the chain corresponds to 42–73; the sequence is IRYNEEADTHWVEYRKKENISSDIENDFYFRY. Asparagine 60 carries an N-linked (GlcNAc...) asparagine glycan. A helical membrane pass occupies residues 74–94; it reads PSFQDVHVMIFVGFGFLMTFL. Residues 95-98 lie on the Cytoplasmic side of the membrane; sequence KRYS. The chain crosses the membrane as a helical span at residues 99–119; sequence FGAVGFNFLIAAFGLQWALLM. Residues 120 to 138 lie on the Extracellular side of the membrane; it reads QGWFHSLDYTDGKIKIGIE. Residues 139-159 form a helical membrane-spanning segment; it reads NLINADFCVAGCLIAYGAVLG. At 160–167 the chain is on the cytoplasmic side; the sequence is KVSPVQLM. The helical transmembrane segment at 168-188 threads the bilayer; that stretch reads VLTLFGITLFAVEEYIILNLI. Over 189–193 the chain is Extracellular; that stretch reads HARDA. Residues 194 to 214 form a helical membrane-spanning segment; sequence GGSMVIHTFGGYYGLSISWML. At 215 to 233 the chain is on the cytoplasmic side; the sequence is YRPNLEQSSNLQGSVYQSD. The helical transmembrane segment at 234–254 threads the bilayer; sequence VFAMIGTLFLWMFWPSFNSAI. The Extracellular segment spans residues 255 to 265; it reads TDHGDGQHRAA. A helical membrane pass occupies residues 266–286; it reads INTYLALASTVLTTVAISSLF. At 287–299 the chain is on the cytoplasmic side; that stretch reads QKHGKLDMVHIQN. Residues 300-320 traverse the membrane as a helical segment; it reads STLAGGVAVGTAAEFMLMPYG. A topological domain (extracellular) is located at residue serine 321. A helical membrane pass occupies residues 322–342; the sequence is LIVGFCCGIISTLGYIYLTPF. The Cytoplasmic portion of the chain corresponds to 343-357; that stretch reads MEKYLKIQDTCGIHN. Residues 358 to 378 traverse the membrane as a helical segment; it reads LHAMPGLIGGIVGAITAAAAT. Residues 379–410 lie on the Extracellular side of the membrane; that stretch reads ESVYGKEGLVNTFDFVGPFKNMVPTTQGGHQA. The chain crosses the membrane as a helical span at residues 411–431; sequence AGLCVAICFGIGGGIMVGCIL. Over 432 to 475 the chain is Cytoplasmic; that stretch reads RLPIWCDPADDNCFNDEPYWELPEEEEIIPPILHYNNHMVNKDV.

The protein belongs to the ammonium transporter (TC 2.A.49) family. Rh subfamily. In terms of assembly, homotrimer.

Its subcellular location is the apical cell membrane. Functionally, functions as an ammonia transporter. May play a role in the elimination of ammonia in the gill. In Tetraodon nigroviridis (Spotted green pufferfish), this protein is Ammonium transporter Rh type C (rhcg).